The chain runs to 201 residues: Glycerol-3-phosphate acyltransferase (201 aa).

5 helical membrane-spanning segments follow: residues 3 to 23 (LFAI…SAIL), 53 to 73 (WVAL…VWLG), 80 to 100 (HFEL…PIFF), 115 to 135 (IAPI…LIFF), and 153 to 175 (FYVW…LLIY).

This sequence belongs to the PlsY family. Probably interacts with PlsX.

It localises to the cell inner membrane. The enzyme catalyses an acyl phosphate + sn-glycerol 3-phosphate = a 1-acyl-sn-glycero-3-phosphate + phosphate. The protein operates within lipid metabolism; phospholipid metabolism. Its function is as follows. Catalyzes the transfer of an acyl group from acyl-phosphate (acyl-PO(4)) to glycerol-3-phosphate (G3P) to form lysophosphatidic acid (LPA). This enzyme utilizes acyl-phosphate as fatty acyl donor, but not acyl-CoA or acyl-ACP. In Pasteurella multocida (strain Pm70), this protein is Glycerol-3-phosphate acyltransferase.